An 89-amino-acid chain; its full sequence is MGLTKEHKTEIITKFGDSATDTGKAEVQVALFTRRITDLTGHLQQHPKDKHSRRGLLMLVGKRKRVLNYLKKVDIERYRKVLADLDLRK.

The protein belongs to the universal ribosomal protein uS15 family. As to quaternary structure, part of the 30S ribosomal subunit. Forms a bridge to the 50S subunit in the 70S ribosome, contacting the 23S rRNA.

Its function is as follows. One of the primary rRNA binding proteins, it binds directly to 16S rRNA where it helps nucleate assembly of the platform of the 30S subunit by binding and bridging several RNA helices of the 16S rRNA. In terms of biological role, forms an intersubunit bridge (bridge B4) with the 23S rRNA of the 50S subunit in the ribosome. The polypeptide is Small ribosomal subunit protein uS15 (Chlorobaculum tepidum (strain ATCC 49652 / DSM 12025 / NBRC 103806 / TLS) (Chlorobium tepidum)).